The sequence spans 631 residues: UvrABC system protein C (631 aa).

The tract at residues 1–20 (MKNETEAVADQPPKTGPVKP) is disordered. Positions 34–112 (MSPGVYRMLD…IKQLKPKFNV (79 aa)) constitute a GIY-YIG domain. In terms of domain architecture, UVR spans 222 to 257 (TDLQRQLADGMAAASEAMEFERAAALRDRIRALTNV).

Belongs to the UvrC family. Interacts with UvrB in an incision complex.

Its subcellular location is the cytoplasm. The UvrABC repair system catalyzes the recognition and processing of DNA lesions. UvrC both incises the 5' and 3' sides of the lesion. The N-terminal half is responsible for the 3' incision and the C-terminal half is responsible for the 5' incision. In Jannaschia sp. (strain CCS1), this protein is UvrABC system protein C.